An 853-amino-acid polypeptide reads, in one-letter code: MCCEKWSRVAEMFLFIEEREDCKILCLCSRAFVEDRKLYNLGLKGYYIRDSGNNSGDQATEEEEGGYSCGTAESHDSKGIGLDESELDSEAELMRSMGLPLQFGRITAHKDFEVSMNTRNKVKIKKKKHQKKYLDEIVQESWRKEYEEDDILASDDPSSIEQYENTRTYELQSKKDTETENPPVENTLSPKLEITEKWEKYWNEYGGGLLWQSWQEKHPGQALSSEPWNFPDTKEEWEQHYSQLYWYYLEQFQYWEAQGWTFDASQSCDTDTYTSKTEADDKNDEKCMKVDLVSFPSSPIMVDNDSSGTSDKDHSEILDGISNIKLNSEEVTQSQLDSCTSHDGHQQLSEVSSKRECPASGQSEPRNGGTNEESNSSGNTNTDPPAEDSQKSSGANTSKDRPHASGTDGDESEEDPPEHKPSKLKRSHELDIDENPASDFDDSGSLLGFKYGSGQKYGGIPNFSHRQVRYLEKNVKLKSKYLDMRRQIKMKNKHIFFTKESEKPFFKKSKILSKVEKFLTWVNKPMDEEASQESSSHDNVHDASTSSDSEEQDMSVKKGDDLLETNNPEPEKCQSVSSAGELETENYERDSLLATVPDEQDCVTQEVPDSRQAETEAEVKKKKNKKKNKKVNGLPPEIAAVPELAKYWAQRYRLFSRFDDGIKLDREGWFSVTPEKIAEHIAGRVSQSFKCDVVVDAFCGVGGNTIQFALTGMRVIAIDIDPVKIALARNNAEVYGIADKIEFICGDFLLLASFLKADVVFLSPPWGGPDYATAETFDIRTMMSPDGFEIFRLSKKITNNIVYFLPRNADIDQVASLAGPGGQVEIEQNFLNNKLKTITAYFGDLIRRPASET.

The interval 53 to 80 is disordered; that stretch reads NNSGDQATEEEEGGYSCGTAESHDSKGI. At Ser-55 the chain carries Phosphoserine. Thr-60 carries the phosphothreonine modification. Residues Ser-85, Ser-89, Ser-96, and Ser-141 each carry the phosphoserine modification. Residue Tyr-146 is modified to Phosphotyrosine. Residues 149–187 form a disordered region; the sequence is DDILASDDPSSIEQYENTRTYELQSKKDTETENPPVENT. Residue Ser-154 is modified to Phosphoserine. A compositionally biased stretch (polar residues) spans 156–171; sequence DPSSIEQYENTRTYEL. A Phosphoserine modification is found at Ser-189. Disordered stretches follow at residues 334–461 and 527–632; these read SQLD…GGIP and DEEA…KKVN. Over residues 367–382 the composition is skewed to low complexity; it reads NGGTNEESNSSGNTNT. A phosphoserine mark is found at Ser-412, Ser-438, and Ser-578. Acidic residues predominate over residues 431 to 442; the sequence is DIDENPASDFDD. Polar residues predominate over residues 564–578; it reads ETNNPEPEKCQSVSS. A compositionally biased stretch (basic and acidic residues) spans 608–619; it reads PDSRQAETEAEV. Basic residues predominate over residues 620 to 630; the sequence is KKKKNKKKNKK. The tract at residues 631–846 is sufficient for catalytic activity; it reads VNGLPPEIAA…TITAYFGDLI (216 aa). Position 719 (Asp-719) interacts with S-adenosyl-L-methionine. Trp-766 lines the N(7)-methylguanosine pocket.

The protein belongs to the methyltransferase superfamily. Trimethylguanosine synthase family. In terms of assembly, may form homooligomers. Interacts with CREBBP/CBP, EED/WAIT1, EP300/P300, NCOA6/PRIP, PPARBP/PBP and SMN. In terms of tissue distribution, ubiquitously expressed. High expression in heart, skeletal muscle, kidney, liver and placenta.

Its subcellular location is the cytoplasm. It is found in the nucleus. It localises to the cajal body. The protein localises to the nucleolus. It carries out the reaction a 5'-end (N(7)-methyl 5'-triphosphoguanosine)-ribonucleoside in snRNA + S-adenosyl-L-methionine = a 5'-end (N(2),N(7)-dimethyl 5'-triphosphoguanosine)-ribonucleoside in snRNA + S-adenosyl-L-homocysteine + H(+). The enzyme catalyses a 5'-end (N(7)-methyl 5'-triphosphoguanosine)-ribonucleoside in snoRNA + S-adenosyl-L-methionine = a 5'-end (N(2),N(7)-dimethyl 5'-triphosphoguanosine)-ribonucleoside in snoRNA + S-adenosyl-L-homocysteine + H(+). The catalysed reaction is a 5'-end (N(2),N(7)-dimethyl 5'-triphosphoguanosine)-ribonucleoside in snRNA + S-adenosyl-L-methionine = a 5'-end (N(2),N(2),N(7)-trimethyl 5'-triphosphoguanosine)-ribonucleoside in snRNA + S-adenosyl-L-homocysteine + H(+). It catalyses the reaction a 5'-end (N(2),N(7)-dimethyl 5'-triphosphoguanosine)-ribonucleoside in snoRNA + S-adenosyl-L-methionine = a 5'-end (N(2),N(2),N(7)-trimethyl 5'-triphosphoguanosine)-ribonucleoside in snoRNA + S-adenosyl-L-homocysteine + H(+). Functionally, catalyzes the 2 serial methylation steps for the conversion of the 7-monomethylguanosine (m(7)G) caps of snRNAs and snoRNAs to a 2,2,7-trimethylguanosine (m(2,2,7)G) cap structure. The enzyme is specific for guanine, and N7 methylation must precede N2 methylation. Hypermethylation of the m7G cap of U snRNAs leads to their concentration in nuclear foci, their colocalization with coilin and the formation of canonical Cajal bodies (CBs). Plays a role in transcriptional regulation. The polypeptide is Trimethylguanosine synthase (TGS1) (Homo sapiens (Human)).